Consider the following 200-residue polypeptide: Pyridoxal 5'-phosphate synthase subunit PdxT (200 aa).

50-52 is a binding site for L-glutamine; that stretch reads GES. Residue Cys-82 is the Nucleophile of the active site. Residues Arg-110 and 138–139 contribute to the L-glutamine site; that span reads IR. Catalysis depends on charge relay system residues His-174 and Glu-176.

It belongs to the glutaminase PdxT/SNO family. In terms of assembly, in the presence of PdxS, forms a dodecamer of heterodimers. Only shows activity in the heterodimer.

It carries out the reaction aldehydo-D-ribose 5-phosphate + D-glyceraldehyde 3-phosphate + L-glutamine = pyridoxal 5'-phosphate + L-glutamate + phosphate + 3 H2O + H(+). It catalyses the reaction L-glutamine + H2O = L-glutamate + NH4(+). It participates in cofactor biosynthesis; pyridoxal 5'-phosphate biosynthesis. Functionally, catalyzes the hydrolysis of glutamine to glutamate and ammonia as part of the biosynthesis of pyridoxal 5'-phosphate. The resulting ammonia molecule is channeled to the active site of PdxS. The sequence is that of Pyridoxal 5'-phosphate synthase subunit PdxT from Oceanobacillus iheyensis (strain DSM 14371 / CIP 107618 / JCM 11309 / KCTC 3954 / HTE831).